Here is a 175-residue protein sequence, read N- to C-terminus: Large ribosomal subunit protein uL10 (175 aa).

It belongs to the universal ribosomal protein uL10 family. In terms of assembly, part of the ribosomal stalk of the 50S ribosomal subunit. The N-terminus interacts with L11 and the large rRNA to form the base of the stalk. The C-terminus forms an elongated spine to which L12 dimers bind in a sequential fashion forming a multimeric L10(L12)X complex.

In terms of biological role, forms part of the ribosomal stalk, playing a central role in the interaction of the ribosome with GTP-bound translation factors. The protein is Large ribosomal subunit protein uL10 of Pelotomaculum thermopropionicum (strain DSM 13744 / JCM 10971 / SI).